Here is a 768-residue protein sequence, read N- to C-terminus: DNA replication licensing factor MCM3 homolog 3 (768 aa).

Residues 290-497 form the MCM domain; that stretch reads TFDLLGNSLA…IDRQISEHVA (208 aa). Position 340-347 (340-347) interacts with ATP; sequence GDPSVAKS. The short motif at 472 to 475 is the Arginine finger element; sequence SRFD. Basic and acidic residues predominate over residues 661 to 670; it reads EMKQQADHDA. The disordered stretch occupies residues 661–690; sequence EMKQQADHDAGATGGTVDGHGSSGNDPMDV. Positions 672-682 are enriched in gly residues; the sequence is ATGGTVDGHGS.

The protein belongs to the MCM family.

It is found in the nucleus. The enzyme catalyses ATP + H2O = ADP + phosphate + H(+). Its function is as follows. Acts as a factor that allows the DNA to undergo a single round of replication per cell cycle. Required for DNA replication and cell proliferation. May act as a component of the MCM complex which is the putative replicative helicase of the replication licensing system in eukaryotic cells. This chain is DNA replication licensing factor MCM3 homolog 3 (ROA3), found in Zea mays (Maize).